Here is an 865-residue protein sequence, read N- to C-terminus: Protein translocase subunit SecA (865 aa).

Residues Q93, 111-115 (GEGKT), and D501 contribute to the ATP site. Zn(2+)-binding residues include C841, C843, C852, and C853.

It belongs to the SecA family. In terms of assembly, monomer and homodimer. Part of the essential Sec protein translocation apparatus which comprises SecA, SecYEG and auxiliary proteins SecDF-YajC and YidC. The cofactor is Zn(2+).

It is found in the cell inner membrane. The protein resides in the cytoplasm. The catalysed reaction is ATP + H2O + cellular proteinSide 1 = ADP + phosphate + cellular proteinSide 2.. Its function is as follows. Part of the Sec protein translocase complex. Interacts with the SecYEG preprotein conducting channel. Has a central role in coupling the hydrolysis of ATP to the transfer of proteins into and across the cell membrane, serving as an ATP-driven molecular motor driving the stepwise translocation of polypeptide chains across the membrane. The sequence is that of Protein translocase subunit SecA from Helicobacter pylori (strain P12).